The sequence spans 453 residues: 3-phosphoshikimate 1-carboxyvinyltransferase (453 aa).

A disordered region spans residues 1–27; sequence MSHDSEPQPVTATPGGPLNGSLKPPGD. Residues Lys28, Ser29, and Arg33 each contribute to the 3-phosphoshikimate site. Lys28 serves as a coordination point for phosphoenolpyruvate. The phosphoenolpyruvate site is built by Gly101 and Arg129. 3-phosphoshikimate-binding residues include Ser175, Gln177, Asp330, and Lys357. Residue Gln177 coordinates phosphoenolpyruvate. The Proton acceptor role is filled by Asp330. Residues Arg361 and Arg405 each contribute to the phosphoenolpyruvate site.

This sequence belongs to the EPSP synthase family. Monomer.

Its subcellular location is the cytoplasm. It catalyses the reaction 3-phosphoshikimate + phosphoenolpyruvate = 5-O-(1-carboxyvinyl)-3-phosphoshikimate + phosphate. It functions in the pathway metabolic intermediate biosynthesis; chorismate biosynthesis; chorismate from D-erythrose 4-phosphate and phosphoenolpyruvate: step 6/7. Functionally, catalyzes the transfer of the enolpyruvyl moiety of phosphoenolpyruvate (PEP) to the 5-hydroxyl of shikimate-3-phosphate (S3P) to produce enolpyruvyl shikimate-3-phosphate and inorganic phosphate. In Methylorubrum extorquens (strain CM4 / NCIMB 13688) (Methylobacterium extorquens), this protein is 3-phosphoshikimate 1-carboxyvinyltransferase.